Here is an 876-residue protein sequence, read N- to C-terminus: Alanine--tRNA ligase (876 aa).

Histidine 565, histidine 569, cysteine 667, and histidine 671 together coordinate Zn(2+).

Belongs to the class-II aminoacyl-tRNA synthetase family. Zn(2+) serves as cofactor.

The protein resides in the cytoplasm. It catalyses the reaction tRNA(Ala) + L-alanine + ATP = L-alanyl-tRNA(Ala) + AMP + diphosphate. Catalyzes the attachment of alanine to tRNA(Ala) in a two-step reaction: alanine is first activated by ATP to form Ala-AMP and then transferred to the acceptor end of tRNA(Ala). Also edits incorrectly charged Ser-tRNA(Ala) and Gly-tRNA(Ala) via its editing domain. In Staphylococcus saprophyticus subsp. saprophyticus (strain ATCC 15305 / DSM 20229 / NCIMB 8711 / NCTC 7292 / S-41), this protein is Alanine--tRNA ligase.